The primary structure comprises 311 residues: Methionyl-tRNA formyltransferase (311 aa).

110–113 serves as a coordination point for (6S)-5,6,7,8-tetrahydrofolate; it reads SLLP.

The protein belongs to the Fmt family.

It carries out the reaction L-methionyl-tRNA(fMet) + (6R)-10-formyltetrahydrofolate = N-formyl-L-methionyl-tRNA(fMet) + (6S)-5,6,7,8-tetrahydrofolate + H(+). Functionally, attaches a formyl group to the free amino group of methionyl-tRNA(fMet). The formyl group appears to play a dual role in the initiator identity of N-formylmethionyl-tRNA by promoting its recognition by IF2 and preventing the misappropriation of this tRNA by the elongation apparatus. The polypeptide is Methionyl-tRNA formyltransferase (Streptococcus pneumoniae serotype 2 (strain D39 / NCTC 7466)).